Consider the following 325-residue polypeptide: Structure-specific endonuclease subunit SLX1 (325 aa).

In terms of domain architecture, GIY-YIG spans 10–92 (ALYTVYILRS…NNPHLSMHIP (83 aa)). The segment at 230-284 (CVVCREEMKSGEGLHAVCTHEGCDGVGHISCWSRSFLKNNDTGSILPVQGQCPMC) adopts an SLX1-type zinc-finger fold.

It belongs to the SLX1 family. As to quaternary structure, forms a heterodimer with SLX4. A divalent metal cation is required as a cofactor.

The protein resides in the nucleus. Catalytic subunit of the SLX1-SLX4 structure-specific endonuclease that resolves DNA secondary structures generated during DNA repair and recombination. Has endonuclease activity towards branched DNA substrates, introducing single-strand cuts in duplex DNA close to junctions with ss-DNA. This is Structure-specific endonuclease subunit SLX1 from Chaetomium globosum (strain ATCC 6205 / CBS 148.51 / DSM 1962 / NBRC 6347 / NRRL 1970) (Soil fungus).